A 295-amino-acid chain; its full sequence is Phosphatidylserine decarboxylase proenzyme (295 aa).

Catalysis depends on charge relay system; for autoendoproteolytic cleavage activity residues D90 and S258. S258 acts as the Schiff-base intermediate with substrate; via pyruvic acid; for decarboxylase activity in catalysis. The residue at position 258 (S258) is a Pyruvic acid (Ser); by autocatalysis.

Belongs to the phosphatidylserine decarboxylase family. PSD-B subfamily. Prokaryotic type I sub-subfamily. In terms of assembly, heterodimer of a large membrane-associated beta subunit and a small pyruvoyl-containing alpha subunit. Pyruvate is required as a cofactor. In terms of processing, is synthesized initially as an inactive proenzyme. Formation of the active enzyme involves a self-maturation process in which the active site pyruvoyl group is generated from an internal serine residue via an autocatalytic post-translational modification. Two non-identical subunits are generated from the proenzyme in this reaction, and the pyruvate is formed at the N-terminus of the alpha chain, which is derived from the carboxyl end of the proenzyme. The autoendoproteolytic cleavage occurs by a canonical serine protease mechanism, in which the side chain hydroxyl group of the serine supplies its oxygen atom to form the C-terminus of the beta chain, while the remainder of the serine residue undergoes an oxidative deamination to produce ammonia and the pyruvoyl prosthetic group on the alpha chain. During this reaction, the Ser that is part of the protease active site of the proenzyme becomes the pyruvoyl prosthetic group, which constitutes an essential element of the active site of the mature decarboxylase.

It localises to the cell membrane. The catalysed reaction is a 1,2-diacyl-sn-glycero-3-phospho-L-serine + H(+) = a 1,2-diacyl-sn-glycero-3-phosphoethanolamine + CO2. Its pathway is phospholipid metabolism; phosphatidylethanolamine biosynthesis; phosphatidylethanolamine from CDP-diacylglycerol: step 2/2. In terms of biological role, catalyzes the formation of phosphatidylethanolamine (PtdEtn) from phosphatidylserine (PtdSer). The polypeptide is Phosphatidylserine decarboxylase proenzyme (Blochmanniella pennsylvanica (strain BPEN)).